Consider the following 154-residue polypeptide: CASP-like protein ARALYDRAFT_485429 (154 aa).

Residues methionine 1–alanine 12 are Cytoplasmic-facing. A helical transmembrane segment spans residues serine 13–phenylalanine 33. Residues aspartate 34–threonine 41 are Extracellular-facing. Residues threonine 42–leucine 62 form a helical membrane-spanning segment. The Cytoplasmic segment spans residues threonine 63–serine 81. Residues isoleucine 82–alanine 102 form a helical membrane-spanning segment. The Extracellular portion of the chain corresponds to serine 103–alanine 128. Residues alanine 129–leucine 149 traverse the membrane as a helical segment. At proline 150–tyrosine 154 the chain is on the cytoplasmic side.

Belongs to the Casparian strip membrane proteins (CASP) family. Homodimer and heterodimers.

The protein resides in the cell membrane. This is CASP-like protein ARALYDRAFT_485429 from Arabidopsis lyrata subsp. lyrata (Lyre-leaved rock-cress).